A 353-amino-acid polypeptide reads, in one-letter code: Photosystem II protein D1 (353 aa).

T2 is modified (N-acetylthreonine). Position 2 is a phosphothreonine (T2). Transmembrane regions (helical) follow at residues Y29–S46, H118–L133, and W142–A156. Residue H118 participates in chlorophyll a binding. Y126 contacts pheophytin a. The [CaMn4O5] cluster site is built by D170 and E189. The helical transmembrane segment at F197–L218 threads the bilayer. Chlorophyll a is bound at residue H198. A quinone is bound by residues H215 and S264–F265. Residue H215 participates in Fe cation binding. H272 is a binding site for Fe cation. A helical transmembrane segment spans residues F274–L288. H332, E333, D342, and A344 together coordinate [CaMn4O5] cluster. A propeptide spanning residues A345 to G353 is cleaved from the precursor.

Belongs to the reaction center PufL/M/PsbA/D family. In terms of assembly, PSII is composed of 1 copy each of membrane proteins PsbA, PsbB, PsbC, PsbD, PsbE, PsbF, PsbH, PsbI, PsbJ, PsbK, PsbL, PsbM, PsbT, PsbX, PsbY, PsbZ, Psb30/Ycf12, at least 3 peripheral proteins of the oxygen-evolving complex and a large number of cofactors. It forms dimeric complexes. The D1/D2 heterodimer binds P680, chlorophylls that are the primary electron donor of PSII, and subsequent electron acceptors. It shares a non-heme iron and each subunit binds pheophytin, quinone, additional chlorophylls, carotenoids and lipids. D1 provides most of the ligands for the Mn4-Ca-O5 cluster of the oxygen-evolving complex (OEC). There is also a Cl(-1) ion associated with D1 and D2, which is required for oxygen evolution. The PSII complex binds additional chlorophylls, carotenoids and specific lipids. serves as cofactor. Post-translationally, tyr-161 forms a radical intermediate that is referred to as redox-active TyrZ, YZ or Y-Z. C-terminally processed by CTPA; processing is essential to allow assembly of the oxygen-evolving complex and thus photosynthetic growth.

It is found in the plastid. Its subcellular location is the chloroplast thylakoid membrane. It catalyses the reaction 2 a plastoquinone + 4 hnu + 2 H2O = 2 a plastoquinol + O2. Functionally, photosystem II (PSII) is a light-driven water:plastoquinone oxidoreductase that uses light energy to abstract electrons from H(2)O, generating O(2) and a proton gradient subsequently used for ATP formation. It consists of a core antenna complex that captures photons, and an electron transfer chain that converts photonic excitation into a charge separation. The D1/D2 (PsbA/PsbD) reaction center heterodimer binds P680, the primary electron donor of PSII as well as several subsequent electron acceptors. This is Photosystem II protein D1 from Triticum aestivum (Wheat).